Consider the following 194-residue polypeptide: Ribonuclease HII (194 aa).

An RNase H type-2 domain is found at 1–194 (MTVGVDEVGR…RLFPRDDGLR (194 aa)). A divalent metal cation-binding residues include aspartate 6, glutamate 7, and aspartate 102.

This sequence belongs to the RNase HII family. It depends on Mn(2+) as a cofactor. Requires Mg(2+) as cofactor.

It localises to the cytoplasm. It catalyses the reaction Endonucleolytic cleavage to 5'-phosphomonoester.. In terms of biological role, endonuclease that specifically degrades the RNA of RNA-DNA hybrids. The chain is Ribonuclease HII from Synechococcus sp. (strain WH7803).